The following is a 190-amino-acid chain: Large ribosomal subunit protein uL6 (190 aa).

It belongs to the universal ribosomal protein uL6 family.

The polypeptide is Large ribosomal subunit protein uL6 (RpL9) (Spodoptera frugiperda (Fall armyworm)).